Reading from the N-terminus, the 97-residue chain is Large ribosomal subunit protein bL25 (97 aa).

This sequence belongs to the bacterial ribosomal protein bL25 family. Part of the 50S ribosomal subunit; part of the 5S rRNA/L5/L18/L25 subcomplex. Contacts the 5S rRNA. Binds to the 5S rRNA independently of L5 and L18.

Functionally, this is one of the proteins that binds to the 5S RNA in the ribosome where it forms part of the central protuberance. This Buchnera aphidicola subsp. Baizongia pistaciae (strain Bp) protein is Large ribosomal subunit protein bL25.